The chain runs to 252 residues: Serine/threonine phosphatase stp (252 aa).

Residues 1-18 (MHAEFRTDRGRIRHHNED) are compositionally biased toward basic and acidic residues. Residues 1-23 (MHAEFRTDRGRIRHHNEDNGGVF) are disordered. A PPM-type phosphatase domain is found at 2 to 242 (HAEFRTDRGR…DNITVLLVER (241 aa)). Mn(2+) contacts are provided by Asp36, Gly37, Asp194, and Asp233.

It belongs to the PP2C family. The cofactor is Mn(2+).

Its subcellular location is the cytoplasm. It is found in the membrane. It catalyses the reaction O-phospho-L-seryl-[protein] + H2O = L-seryl-[protein] + phosphate. It carries out the reaction O-phospho-L-threonyl-[protein] + H2O = L-threonyl-[protein] + phosphate. Functionally, protein phosphatase that dephosphorylates EF-Tu. This Listeria welshimeri serovar 6b (strain ATCC 35897 / DSM 20650 / CCUG 15529 / CIP 8149 / NCTC 11857 / SLCC 5334 / V8) protein is Serine/threonine phosphatase stp (stp).